We begin with the raw amino-acid sequence, 303 residues long: Methionyl-tRNA formyltransferase (303 aa).

111–114 (SLLP) contributes to the (6S)-5,6,7,8-tetrahydrofolate binding site.

Belongs to the Fmt family.

It catalyses the reaction L-methionyl-tRNA(fMet) + (6R)-10-formyltetrahydrofolate = N-formyl-L-methionyl-tRNA(fMet) + (6S)-5,6,7,8-tetrahydrofolate + H(+). Its function is as follows. Attaches a formyl group to the free amino group of methionyl-tRNA(fMet). The formyl group appears to play a dual role in the initiator identity of N-formylmethionyl-tRNA by promoting its recognition by IF2 and preventing the misappropriation of this tRNA by the elongation apparatus. The chain is Methionyl-tRNA formyltransferase from Ehrlichia canis (strain Jake).